The primary structure comprises 201 residues: Peptidyl-tRNA hydrolase (201 aa).

Residue Tyr-14 coordinates tRNA. The active-site Proton acceptor is the His-19. TRNA-binding residues include Tyr-64, Asn-66, and Asn-112.

It belongs to the PTH family. As to quaternary structure, monomer.

It localises to the cytoplasm. The enzyme catalyses an N-acyl-L-alpha-aminoacyl-tRNA + H2O = an N-acyl-L-amino acid + a tRNA + H(+). Its function is as follows. Hydrolyzes ribosome-free peptidyl-tRNAs (with 1 or more amino acids incorporated), which drop off the ribosome during protein synthesis, or as a result of ribosome stalling. In terms of biological role, catalyzes the release of premature peptidyl moieties from peptidyl-tRNA molecules trapped in stalled 50S ribosomal subunits, and thus maintains levels of free tRNAs and 50S ribosomes. The protein is Peptidyl-tRNA hydrolase of Afipia carboxidovorans (strain ATCC 49405 / DSM 1227 / KCTC 32145 / OM5) (Oligotropha carboxidovorans).